Consider the following 110-residue polypeptide: Tumor suppressor candidate 2 (110 aa).

Gly2 carries N-myristoyl glycine lipidation. Ser50 is modified (phosphoserine).

It belongs to the TUSC2 family. In terms of processing, myristoylation is required for tumor suppressor activity. As to expression, strong expression in heart, lung, skeletal muscle, kidney, and pancreas, followed by brain and liver, lowest levels in placenta.

In terms of biological role, may function as a tumor suppressor, inhibiting colony formation, causing G1 arrest and ultimately inducing apoptosis in homozygous 3p21.3 120-kb region-deficient cells. This Homo sapiens (Human) protein is Tumor suppressor candidate 2 (TUSC2).